The chain runs to 129 residues: MAKAPIRARKRVKKQVSDGVAHIHASFNNTIVTITDRQGNALGWATAGGSGFRGSRKSTPFAAQVAAERCAEAVKEYGIKNLEVVVKGPGPGRESTVRALNAAGFRITNITDVTPIPHNGCRPPKKRRV.

Belongs to the universal ribosomal protein uS11 family. As to quaternary structure, part of the 30S ribosomal subunit. Interacts with proteins S7 and S18. Binds to IF-3.

Located on the platform of the 30S subunit, it bridges several disparate RNA helices of the 16S rRNA. Forms part of the Shine-Dalgarno cleft in the 70S ribosome. This Sodalis glossinidius (strain morsitans) protein is Small ribosomal subunit protein uS11.